A 98-amino-acid chain; its full sequence is NADH-ubiquinone oxidoreductase chain 4L (98 aa).

A run of 3 helical transmembrane segments spans residues 1 to 21, 29 to 49, and 61 to 81; these read MSLT…GLLM, SLLC…ITIL, and IILL…LVMV.

Belongs to the complex I subunit 4L family. In terms of assembly, core subunit of respiratory chain NADH dehydrogenase (Complex I) which is composed of 45 different subunits.

The protein localises to the mitochondrion inner membrane. The catalysed reaction is a ubiquinone + NADH + 5 H(+)(in) = a ubiquinol + NAD(+) + 4 H(+)(out). Core subunit of the mitochondrial membrane respiratory chain NADH dehydrogenase (Complex I) which catalyzes electron transfer from NADH through the respiratory chain, using ubiquinone as an electron acceptor. Part of the enzyme membrane arm which is embedded in the lipid bilayer and involved in proton translocation. The protein is NADH-ubiquinone oxidoreductase chain 4L (MT-ND4L) of Mystacina tuberculata (New Zealand lesser short-tailed bat).